The chain runs to 332 residues: MDPRSEVLLRQRHLFAAPTLLAGLPADDLLAELPLAHGWSWHAGEQAQLDARFPGRSRFDTRAPVGAWSAAVVFLPKSRELADYLLASLAARLPGGELFLVGEKRGGIERASKQLAAYGRPRKLDSARHCQLWQVQVEQAPAEPDLLALAQRYSLPLADGELQVVSLPGVFSHGRLDRGSALLLEHLDDLPKGHLLDFGCGAGVLGALVKRRYPASRLTLLDVDAFAVASSRLTLAANGLDGEVIAADGIDGAPRGLAAIVSNPPFHQGVHTDYQASERLLQRAAEHLAAGGELRLVANSFLKYPPLIERHLGPCRTLAEGDGFRVYTARRP.

It belongs to the methyltransferase superfamily. RsmC family. As to quaternary structure, monomer.

Its subcellular location is the cytoplasm. The enzyme catalyses guanosine(1207) in 16S rRNA + S-adenosyl-L-methionine = N(2)-methylguanosine(1207) in 16S rRNA + S-adenosyl-L-homocysteine + H(+). Its function is as follows. Specifically methylates the guanine in position 1207 of 16S rRNA in the 30S particle. This is Ribosomal RNA small subunit methyltransferase C from Pseudomonas paraeruginosa (strain DSM 24068 / PA7) (Pseudomonas aeruginosa (strain PA7)).